The chain runs to 285 residues: Polyamine aminopropyltransferase (285 aa).

Residues 5 to 241 form the PABS domain; it reads QDWFTESYPD…GWWSATMAGK (237 aa). Gln-35 is an S-methyl-5'-thioadenosine binding site. Positions 66 and 90 each coordinate spermidine. Residues Asp-110 and 141–142 each bind S-methyl-5'-thioadenosine; that span reads DG. Asp-160 serves as the catalytic Proton acceptor. 160–163 contacts spermidine; the sequence is DSTD. Pro-167 provides a ligand contact to S-methyl-5'-thioadenosine.

Belongs to the spermidine/spermine synthase family. Homodimer or homotetramer.

The protein resides in the cytoplasm. It catalyses the reaction S-adenosyl 3-(methylsulfanyl)propylamine + putrescine = S-methyl-5'-thioadenosine + spermidine + H(+). Its pathway is amine and polyamine biosynthesis; spermidine biosynthesis; spermidine from putrescine: step 1/1. Functionally, catalyzes the irreversible transfer of a propylamine group from the amino donor S-adenosylmethioninamine (decarboxy-AdoMet) to putrescine (1,4-diaminobutane) to yield spermidine. This chain is Polyamine aminopropyltransferase, found in Methylococcus capsulatus (strain ATCC 33009 / NCIMB 11132 / Bath).